Reading from the N-terminus, the 477-residue chain is Otolin-1 (477 aa).

Positions 1 to 23 (MWMFSWLCAILIILAIAGMNTIA) are cleaved as a signal peptide. 2 disordered regions span residues 28–55 (HTKF…PEEE) and 111–337 (QKGE…KGEL). The segment covering 33–42 (KKSEEREMPK) has biased composition (basic and acidic residues). The Collagen-like 1 domain occupies 116–175 (GETGQPGPKGEAGNLGIPGPPGVVGPQGPRGYKGEKGLKGERGDQGVPGYPGKPGAQGEP). A hydroxyproline mark is found at Pro133 and Pro136. A compositionally biased stretch (basic and acidic residues) spans 147-159 (YKGEKGLKGERGD). Hydroxyproline is present on residues Pro163, Pro166, and Pro169. Lys178 is subject to 5-hydroxylysine. Lys178 is a glycosylation site (O-linked (Gal...) hydroxylysine). Residues 182–191 (GNIGLGGVKG) are compositionally biased toward gly residues. A glycan (N-linked (GlcNAc...) asparagine) is linked at Asn202. 2 consecutive Collagen-like domains span residues 209 to 268 (GDQG…KGSK) and 278 to 337 (GRNG…KGEL). Position 223 is a hydroxyproline (Pro223). 2 stretches are compositionally biased toward basic and acidic residues: residues 226–240 (KGEK…EMGD) and 247–277 (SGER…EGKS). Residues Pro283 and Pro301 each carry the hydroxyproline modification. Positions 298 to 310 (LGPPGLLGPTGPK) are enriched in low complexity. Lys310 bears the 5-hydroxylysine mark. Lys310 carries an O-linked (Gal...) hydroxylysine glycan. The 136-residue stretch at 338-473 (ARVPRSAFSA…GFLLYPEETS (136 aa)) folds into the C1q domain. N-linked (GlcNAc...) asparagine glycosylation occurs at Asn381.

The protein belongs to the OTOL1 family. As to quaternary structure, homooligomer; disulfide-linked; probably forms homotrimers. Interacts with OC90. Interacts with CBLN1.

It localises to the secreted. It is found in the extracellular space. Its subcellular location is the extracellular matrix. Functionally, collagen-like protein specifically expressed in the inner ear, which provides an organic scaffold for otoconia, a calcium carbonate structure in the saccule and utricle of the ear. Acts as a scaffold for biomineralization: sequesters calcium and forms interconnecting fibrils between otoconia that are incorporated into the calcium crystal structure. Together with OC90, modulates calcite crystal morphology and growth kinetics. This is Otolin-1 from Homo sapiens (Human).